A 229-amino-acid polypeptide reads, in one-letter code: Probable transmembrane reductase CYB561D1 (229 aa).

Over 1-24 (MQPLEVGLVPAPAGEPRLTRWLRR) the chain is Cytoplasmic. One can recognise a Cytochrome b561 domain in the interval 22 to 224 (LRRGSGILAH…HQISRSYLPR (203 aa)). A helical membrane pass occupies residues 25-45 (GSGILAHLVALGFTIFLTALS). The Lumenal portion of the chain corresponds to 46–53 (RPGTSLFS). A helical membrane pass occupies residues 54–74 (WHPVFMALAFCLCMAEAILLF). His55 contributes to the heme b binding site. Topologically, residues 75-91 (SPEHSLFFFCSRKARIR) are cytoplasmic. A helical transmembrane segment spans residues 92 to 112 (LHWAGQTLAILCAALGLGFII). His93 and His127 together coordinate heme b. Topologically, residues 113–128 (SSRTRSELPHLVSWHS) are lumenal. A helical membrane pass occupies residues 129–149 (WVGALTLLATAVQALCGLCLL). Residues 150 to 169 (CPRAARVSRVARLKLYHLTC) are Cytoplasmic-facing. Residue His166 participates in heme b binding. Residues 170-190 (GLVVYLMATVTVLLGMYSVWF) form a helical membrane-spanning segment. The Lumenal segment spans residues 191–193 (QAQ). Residues 194–214 (IKGAAWYLCLALPVYPALVIM) traverse the membrane as a helical segment. At 215–229 (HQISRSYLPRKKMEM) the chain is on the cytoplasmic side.

The cofactor is heme b.

It is found in the membrane. The catalysed reaction is monodehydro-L-ascorbate radical(out) + L-ascorbate(in) = monodehydro-L-ascorbate radical(in) + L-ascorbate(out). It catalyses the reaction Fe(3+)(out) + L-ascorbate(in) = monodehydro-L-ascorbate radical(in) + Fe(2+)(out) + H(+). Its function is as follows. Probable transmembrane reductase that may use ascorbate as an electron donor and transfer electrons across membranes to reduce monodehydro-L-ascorbate radical and iron cations Fe(3+) in another cellular compartment. The sequence is that of Probable transmembrane reductase CYB561D1 from Homo sapiens (Human).